The sequence spans 248 residues: Triosephosphate isomerase B (248 aa).

The substrate site is built by Asn-11 and Lys-13. His-95 (electrophile) is an active-site residue. Residue Glu-165 is the Proton acceptor of the active site.

Belongs to the triosephosphate isomerase family. Homodimer.

It localises to the cytoplasm. It catalyses the reaction dihydroxyacetone phosphate = methylglyoxal + phosphate. The enzyme catalyses D-glyceraldehyde 3-phosphate = dihydroxyacetone phosphate. The protein operates within carbohydrate degradation; glycolysis; D-glyceraldehyde 3-phosphate from glycerone phosphate: step 1/1. It participates in carbohydrate biosynthesis; gluconeogenesis. Its function is as follows. Triosephosphate isomerase is an extremely efficient metabolic enzyme that catalyzes the interconversion between dihydroxyacetone phosphate (DHAP) and D-glyceraldehyde-3-phosphate (G3P) in glycolysis and gluconeogenesis. In terms of biological role, it is also responsible for the non-negligible production of methylglyoxal a reactive cytotoxic side-product that modifies and can alter proteins, DNA and lipids. This Danio rerio (Zebrafish) protein is Triosephosphate isomerase B (tpi1b).